The chain runs to 394 residues: 1-deoxy-D-xylulose 5-phosphate reductoisomerase (394 aa).

5 residues coordinate NADPH: Thr13, Gly14, Thr15, Ile16, and Asn125. Lys126 provides a ligand contact to 1-deoxy-D-xylulose 5-phosphate. Glu127 lines the NADPH pocket. Residue Asp151 participates in Mn(2+) binding. Positions 152, 153, 182, and 205 each coordinate 1-deoxy-D-xylulose 5-phosphate. Glu153 serves as a coordination point for Mn(2+). Gly211 is an NADPH binding site. 4 residues coordinate 1-deoxy-D-xylulose 5-phosphate: Ser218, Asn223, Lys224, and Glu227. Glu227 contacts Mn(2+).

It belongs to the DXR family. Requires Mg(2+) as cofactor. Mn(2+) serves as cofactor.

It catalyses the reaction 2-C-methyl-D-erythritol 4-phosphate + NADP(+) = 1-deoxy-D-xylulose 5-phosphate + NADPH + H(+). Its pathway is isoprenoid biosynthesis; isopentenyl diphosphate biosynthesis via DXP pathway; isopentenyl diphosphate from 1-deoxy-D-xylulose 5-phosphate: step 1/6. Functionally, catalyzes the NADPH-dependent rearrangement and reduction of 1-deoxy-D-xylulose-5-phosphate (DXP) to 2-C-methyl-D-erythritol 4-phosphate (MEP). The polypeptide is 1-deoxy-D-xylulose 5-phosphate reductoisomerase (Methylobacillus flagellatus (strain ATCC 51484 / DSM 6875 / VKM B-1610 / KT)).